A 411-amino-acid chain; its full sequence is Bestrophin homolog 26 (411 aa).

A run of 4 helical transmembrane segments spans residues 30-50, 73-93, 235-255, and 272-292; these read FTAI…FMVI, SHQE…SSVV, IPIP…YFAV, and TWIT…MGWM.

Belongs to the anion channel-forming bestrophin (TC 1.A.46) family. Calcium-sensitive chloride channel subfamily. Forms oligomers.

Its subcellular location is the cell membrane. Functionally, forms chloride channels. This chain is Bestrophin homolog 26 (best-26), found in Caenorhabditis elegans.